Reading from the N-terminus, the 182-residue chain is ATP-dependent protease subunit HslV (182 aa).

Residue Thr2 is part of the active site. Na(+) is bound by residues Gly157, Cys160, and Thr163.

It belongs to the peptidase T1B family. HslV subfamily. As to quaternary structure, a double ring-shaped homohexamer of HslV is capped on each side by a ring-shaped HslU homohexamer. The assembly of the HslU/HslV complex is dependent on binding of ATP.

It localises to the cytoplasm. The enzyme catalyses ATP-dependent cleavage of peptide bonds with broad specificity.. With respect to regulation, allosterically activated by HslU binding. Its function is as follows. Protease subunit of a proteasome-like degradation complex believed to be a general protein degrading machinery. This chain is ATP-dependent protease subunit HslV, found in Sodalis glossinidius (strain morsitans).